The following is a 162-amino-acid chain: MKIILRKDVATLGDAGEVVTVKNGYANNYLIPQGFAIRATEGTLKALETEKKQQAHKIEQRRKEARELSAKIEQMTLNISTKAGESGKLFGTVTSGDIADALKAQGVEIDRRKIQLEAPIKALGKYEAVAKIYMDIAAKLNIVVGAEGAEAVETAEAPEAGE.

It belongs to the bacterial ribosomal protein bL9 family.

Its function is as follows. Binds to the 23S rRNA. The polypeptide is Large ribosomal subunit protein bL9 (Chlorobaculum parvum (strain DSM 263 / NCIMB 8327) (Chlorobium vibrioforme subsp. thiosulfatophilum)).